Reading from the N-terminus, the 56-residue chain is Small ribosomal subunit protein uS14 (56 aa).

4 residues coordinate Zn(2+): cysteine 21, cysteine 24, cysteine 39, and cysteine 42.

It belongs to the universal ribosomal protein uS14 family. Zinc-binding uS14 subfamily. In terms of assembly, part of the 30S ribosomal subunit. Zn(2+) is required as a cofactor.

Binds 16S rRNA, required for the assembly of 30S particles. This chain is Small ribosomal subunit protein uS14, found in Thermococcus kodakarensis (strain ATCC BAA-918 / JCM 12380 / KOD1) (Pyrococcus kodakaraensis (strain KOD1)).